Here is a 220-residue protein sequence, read N- to C-terminus: Kinetochore protein Spc25 (220 aa).

Positions 79-114 (HLTQEVEAIKLRNLAMKDQIKQQKMLNNQRKNEIME) form a coiled coil.

This sequence belongs to the SPC25 family. Component of the Ndc80 complex, which is composed of Ndc80, Nuf2 and Spc25.

It is found in the nucleus. The protein resides in the chromosome. The protein localises to the centromere. It localises to the kinetochore. Functionally, acts as a component of the essential kinetochore-associated Ndc80 complex, which is required for chromosome segregation and spindle checkpoint activity during meiosis and mitosis. Required for kinetochore integrity and the organization of stable microtubule binding sites in the outer plate of the kinetochore. Participates in SAC signaling that responds specifically to disruptions in spindle microtubule dynamics. The NDC80 complex synergistically enhances the affinity of the SKA1 complex for microtubules and may allow the NDC80 complex to track depolymerizing microtubules. The protein is Kinetochore protein Spc25 of Drosophila orena (Fruit fly).